Here is a 332-residue protein sequence, read N- to C-terminus: Holliday junction branch migration complex subunit RuvB (332 aa).

The tract at residues 1–181 (MSRILDNELM…FGITGHMEYY (181 aa)) is large ATPase domain (RuvB-L). ATP-binding positions include Leu20, Arg21, Gly62, Lys65, Thr66, Thr67, 128–130 (EDF), Arg171, Tyr181, and Arg218. Residue Thr66 participates in Mg(2+) binding. The interval 182–252 (EAGDLTEIVE…ITDQALSMLD (71 aa)) is small ATPAse domain (RuvB-S). Residues 255 to 332 (QEGLDYVDQK…EHLGYEYMKE (78 aa)) form a head domain (RuvB-H) region. DNA contacts are provided by Arg291, Arg310, Arg312, and Arg315.

It belongs to the RuvB family. In terms of assembly, homohexamer. Forms an RuvA(8)-RuvB(12)-Holliday junction (HJ) complex. HJ DNA is sandwiched between 2 RuvA tetramers; dsDNA enters through RuvA and exits via RuvB. An RuvB hexamer assembles on each DNA strand where it exits the tetramer. Each RuvB hexamer is contacted by two RuvA subunits (via domain III) on 2 adjacent RuvB subunits; this complex drives branch migration. In the full resolvosome a probable DNA-RuvA(4)-RuvB(12)-RuvC(2) complex forms which resolves the HJ.

It is found in the cytoplasm. It catalyses the reaction ATP + H2O = ADP + phosphate + H(+). Functionally, the RuvA-RuvB-RuvC complex processes Holliday junction (HJ) DNA during genetic recombination and DNA repair, while the RuvA-RuvB complex plays an important role in the rescue of blocked DNA replication forks via replication fork reversal (RFR). RuvA specifically binds to HJ cruciform DNA, conferring on it an open structure. The RuvB hexamer acts as an ATP-dependent pump, pulling dsDNA into and through the RuvAB complex. RuvB forms 2 homohexamers on either side of HJ DNA bound by 1 or 2 RuvA tetramers; 4 subunits per hexamer contact DNA at a time. Coordinated motions by a converter formed by DNA-disengaged RuvB subunits stimulates ATP hydrolysis and nucleotide exchange. Immobilization of the converter enables RuvB to convert the ATP-contained energy into a lever motion, pulling 2 nucleotides of DNA out of the RuvA tetramer per ATP hydrolyzed, thus driving DNA branch migration. The RuvB motors rotate together with the DNA substrate, which together with the progressing nucleotide cycle form the mechanistic basis for DNA recombination by continuous HJ branch migration. Branch migration allows RuvC to scan DNA until it finds its consensus sequence, where it cleaves and resolves cruciform DNA. The protein is Holliday junction branch migration complex subunit RuvB of Streptococcus sanguinis (strain SK36).